A 467-amino-acid chain; its full sequence is Argininosuccinate lyase (467 aa).

This sequence belongs to the lyase 1 family. Argininosuccinate lyase subfamily.

It is found in the cytoplasm. It catalyses the reaction 2-(N(omega)-L-arginino)succinate = fumarate + L-arginine. It participates in amino-acid biosynthesis; L-arginine biosynthesis; L-arginine from L-ornithine and carbamoyl phosphate: step 3/3. The protein is Argininosuccinate lyase of Rhizobium etli (strain ATCC 51251 / DSM 11541 / JCM 21823 / NBRC 15573 / CFN 42).